The sequence spans 1066 residues: Vinculin (1066 aa).

Residues 1 to 835 are N-terminal globular head; that stretch reads MPVFHTRTIE…GAVAKVREAF (835 aa). The residue at position 97 (Ser-97) is a Phosphoserine. The segment at 168 to 208 is talin-interaction; it reads MTKMAKMIDERQQELTHQEHRVMLVNSMNTVKELLPVLISA. Lys-173 carries the N6-acetyllysine modification. 3 consecutive repeat copies span residues 259–369, 370–479, and 480–589. The segment at 259 to 589 is 3 X 112 AA tandem repeats; sequence ASKDTEAMKR…LKDLKTQMQE (331 aa). 6 positions are modified to phosphoserine: Ser-260, Ser-272, Ser-275, Ser-290, Ser-346, and Ser-434. At Lys-496 the chain carries N6-acetyllysine. Tyr-537 carries the post-translational modification Phosphotyrosine. Ser-574, Ser-579, and Ser-600 each carry phosphoserine. Thr-604 and Thr-672 each carry phosphothreonine. Residue Ser-721 is modified to Phosphoserine. An interaction with ACTN4 region spans residues 741 to 764; that stretch reads MANIQPQMLVAGATSIARRANRIL. Phosphoserine occurs at positions 795 and 809. Tyr-822 is subject to Phosphotyrosine. The interval 836 to 878 is linker (Pro-rich); that stretch reads QPQEPDFPPPPPDLEQLRLTDELAPPKPPLPEGEVPPPRPPPP. Positions 857–887 are disordered; it reads ELAPPKPPLPEGEVPPPRPPPPEEKDEEFPE. Residues 860–876 show a composition bias toward pro residues; sequence PPKPPLPEGEVPPPRPP. Positions 879 to 1066 are C-terminal tail; sequence EEKDEEFPEQ…RWVRKTPWYQ (188 aa). Facilitates phospholipid membrane insertion stretches follow at residues 935–978 and 1052–1066; these read RLVR…KRIR and AGFT…PWYQ. The residue at position 1065 (Tyr-1065) is a Phosphotyrosine; by SRC-type Tyr-kinases.

The protein belongs to the vinculin/alpha-catenin family. Exhibits self-association properties. Part of a complex composed of THSD1, PTK2/FAK1, TLN1 and VCL. Interacts with APBB1IP, NRAP and TLN1. Interacts with CTNNB1 and this interaction is necessary for its localization to the cell-cell junctions and for its function in regulating cell surface expression of E-cadherin. Interacts with SORBS1. Interacts with SYNM. Interacts with CTNNA1. Binds to ACTN4; this interaction triggers conformational changes. Interacts with FLII. Post-translationally, phosphorylated; on serines, threonines and tyrosines. Phosphorylation on Tyr-1065 in activated platelets affects head-tail interactions and cell spreading but has no effect on actin binding nor on localization to focal adhesion plaques. In terms of processing, acetylated; mainly by myristic acid but also by a small amount of palmitic acid.

The protein resides in the cell membrane. The protein localises to the cell junction. It is found in the adherens junction. It localises to the focal adhesion. Its subcellular location is the cytoplasm. The protein resides in the cytoskeleton. The protein localises to the sarcolemma. It is found in the cell projection. It localises to the podosome. Its function is as follows. Actin filament (F-actin)-binding protein involved in cell-matrix adhesion and cell-cell adhesion. Regulates cell-surface E-cadherin expression and potentiates mechanosensing by the E-cadherin complex. May also play important roles in cell morphology and locomotion. This chain is Vinculin, found in Rattus norvegicus (Rat).